A 343-amino-acid chain; its full sequence is Probable 4-hydroxy-tetrahydrodipicolinate reductase 1, chloroplastic (343 aa).

Residues 1–14 (MLASTFATHPAAAA) constitute a chloroplast transit peptide. NAD(+) is bound by residues 167–169 (GTT) and 190–193 (SPQM). Histidine 226 (proton donor/acceptor) is an active-site residue. The Proton donor role is filled by lysine 230. (S)-2,3,4,5-tetrahydrodipicolinate is bound at residue 235 to 236 (GT).

This sequence belongs to the DapB family.

It localises to the plastid. It is found in the chloroplast. The enzyme catalyses (S)-2,3,4,5-tetrahydrodipicolinate + NAD(+) + H2O = (2S,4S)-4-hydroxy-2,3,4,5-tetrahydrodipicolinate + NADH + H(+). The catalysed reaction is (S)-2,3,4,5-tetrahydrodipicolinate + NADP(+) + H2O = (2S,4S)-4-hydroxy-2,3,4,5-tetrahydrodipicolinate + NADPH + H(+). It functions in the pathway amino-acid biosynthesis; L-lysine biosynthesis via DAP pathway; (S)-tetrahydrodipicolinate from L-aspartate: step 4/4. Functionally, catalyzes the conversion of 4-hydroxy-tetrahydrodipicolinate (HTPA) to tetrahydrodipicolinate. The chain is Probable 4-hydroxy-tetrahydrodipicolinate reductase 1, chloroplastic (DAPB1) from Oryza sativa subsp. japonica (Rice).